The primary structure comprises 220 residues: Probable nicotinate-nucleotide adenylyltransferase (220 aa).

This sequence belongs to the NadD family.

It carries out the reaction nicotinate beta-D-ribonucleotide + ATP + H(+) = deamido-NAD(+) + diphosphate. Its pathway is cofactor biosynthesis; NAD(+) biosynthesis; deamido-NAD(+) from nicotinate D-ribonucleotide: step 1/1. Catalyzes the reversible adenylation of nicotinate mononucleotide (NaMN) to nicotinic acid adenine dinucleotide (NaAD). The sequence is that of Probable nicotinate-nucleotide adenylyltransferase from Yersinia enterocolitica serotype O:8 / biotype 1B (strain NCTC 13174 / 8081).